Reading from the N-terminus, the 639-residue chain is Mediator of RNA polymerase II transcription subunit 17 (639 aa).

A compositionally biased stretch (polar residues) spans 32 to 43 (ASATVTTNGTTA). Disordered regions lie at residues 32–68 (ASAT…EEHS) and 130–159 (MGDA…NNDS). The span at 48 to 57 (DSGSQQSVSS) shows a compositional bias: low complexity. The span at 58–68 (APIQQNSEEHS) shows a compositional bias: polar residues. The stretch at 245–271 (WKLRSLEDSKALLKENYAKLQKSLEVE) forms a coiled coil.

This sequence belongs to the Mediator complex subunit 17 family. As to quaternary structure, component of the Mediator complex.

The protein localises to the nucleus. Functionally, component of the Mediator complex, a coactivator involved in the regulated transcription of nearly all RNA polymerase II-dependent genes. Mediator functions as a bridge to convey information from gene-specific regulatory proteins to the basal RNA polymerase II transcription machinery. Mediator is recruited to promoters by direct interactions with regulatory proteins and serves as a scaffold for the assembly of a functional preinitiation complex with RNA polymerase II and the general transcription factors. The protein is Mediator of RNA polymerase II transcription subunit 17 (SRB4) of Eremothecium gossypii (strain ATCC 10895 / CBS 109.51 / FGSC 9923 / NRRL Y-1056) (Yeast).